A 96-amino-acid polypeptide reads, in one-letter code: MLFHVRMDVNIPDDMPVEVADEIKAREKAYSQALQKSGKWPHIWRLVGEYANYSIFDVESNAELHGILTGLPLFSYMKIEVTPLCRHPSSIRDDES.

This sequence belongs to the muconolactone Delta-isomerase family. In terms of assembly, homodecamer.

The catalysed reaction is (S)-muconolactone = (4,5-dihydro-5-oxofuran-2-yl)-acetate. It participates in aromatic compound metabolism; beta-ketoadipate pathway; 5-oxo-4,5-dihydro-2-furylacetate from catechol: step 3/3. This is Muconolactone Delta-isomerase 1 (catC1) from Acinetobacter lwoffii.